A 227-amino-acid chain; its full sequence is Protein LppM (227 aa).

The signal sequence occupies residues 1 to 24 (MARTRRRGMLAIAMLLMLVPLATG). Cys25 carries N-palmitoyl cysteine lipidation. Cys25 carries S-diacylglycerol cysteine lipidation. The tract at residues 26–185 (LRVRASITIS…ARYTDPNTRS (160 aa)) is important for bacterial uptake by host macrophages. Residues 190 to 210 (GIWLGIAAFAAAGVVAVLAWI) form a helical membrane-spanning segment.

In terms of processing, a shorter form (about 20 kDa) is secreted; upon overexpression of the whole protein in M.smegmatis the C-terminus of the short form is about residue 187, suggesting it is generated by cleavage of the protein before its C-terminal transmembrane domain.

Its subcellular location is the membrane. It is found in the secreted. The protein resides in the cell wall. Functionally, a putative lipoprotein that seems to be specialized for the initial steps of macrophage infection. A non-acylated fragment (residues 26-185) binds phosphatidyl-myo-inositol mannosides (PIMs). Limits, in a TLR2-dependent fashion, bacterial uptake by host (mouse); this effect may be mediated by nonacylated fragment 26-185. Plays a TLR2-dependent role in host phagosome maturation arrest. Plays a TLR2-independent role in chemokine production during the first 24 hours of mouse infection. This Mycobacterium tuberculosis (strain ATCC 25618 / H37Rv) protein is Protein LppM (lppM).